A 492-amino-acid chain; its full sequence is NAD(P)H-quinone oxidoreductase subunit 2 A, chloroplastic (492 aa).

Helical transmembrane passes span 6–26, 39–59, 81–101, 106–126, 131–151, 165–185, 209–229, 277–297, 305–325, 329–349, 377–397, 400–420, and 466–486; these read LLLF…GLIL, TPWL…ALLF, VFQF…VEYI, MAIT…MFLC, LITI…LSGY, YLLM…WLYG, PGIS…LSPA, WHLL…LIAI, MLAY…IVGD, GYAS…GTFA, ALSS…AGFF, LHLF…IGLL, and MIVC…IIAI.

Belongs to the complex I subunit 2 family. NDH is composed of at least 16 different subunits, 5 of which are encoded in the nucleus.

The protein resides in the plastid. The protein localises to the chloroplast thylakoid membrane. The enzyme catalyses a plastoquinone + NADH + (n+1) H(+)(in) = a plastoquinol + NAD(+) + n H(+)(out). The catalysed reaction is a plastoquinone + NADPH + (n+1) H(+)(in) = a plastoquinol + NADP(+) + n H(+)(out). Functionally, NDH shuttles electrons from NAD(P)H:plastoquinone, via FMN and iron-sulfur (Fe-S) centers, to quinones in the photosynthetic chain and possibly in a chloroplast respiratory chain. The immediate electron acceptor for the enzyme in this species is believed to be plastoquinone. Couples the redox reaction to proton translocation, and thus conserves the redox energy in a proton gradient. This chain is NAD(P)H-quinone oxidoreductase subunit 2 A, chloroplastic, found in Illicium oligandrum (Star anise).